Reading from the N-terminus, the 368-residue chain is 4-hydroxy-3-methylbut-2-en-1-yl diphosphate synthase (flavodoxin) (368 aa).

[4Fe-4S] cluster is bound by residues Cys-271, Cys-274, Cys-306, and Glu-313.

It belongs to the IspG family. [4Fe-4S] cluster serves as cofactor.

It carries out the reaction (2E)-4-hydroxy-3-methylbut-2-enyl diphosphate + oxidized [flavodoxin] + H2O + 2 H(+) = 2-C-methyl-D-erythritol 2,4-cyclic diphosphate + reduced [flavodoxin]. It participates in isoprenoid biosynthesis; isopentenyl diphosphate biosynthesis via DXP pathway; isopentenyl diphosphate from 1-deoxy-D-xylulose 5-phosphate: step 5/6. Its function is as follows. Converts 2C-methyl-D-erythritol 2,4-cyclodiphosphate (ME-2,4cPP) into 1-hydroxy-2-methyl-2-(E)-butenyl 4-diphosphate. The chain is 4-hydroxy-3-methylbut-2-en-1-yl diphosphate synthase (flavodoxin) from Buchnera aphidicola subsp. Acyrthosiphon pisum (strain APS) (Acyrthosiphon pisum symbiotic bacterium).